A 309-amino-acid chain; its full sequence is Non-homologous end-joining factor 1 (309 aa).

A globular head region spans residues 1–134 (MEAVLSALPW…TPVAVVCRQL (134 aa)). Residues 223–298 (GKTGRKRKHS…AGSEDRSTSR (76 aa)) are C-terminal tail. The disordered stretch occupies residues 223-309 (GKTGRKRKHS…KKKKAVGLFR (87 aa)). The segment covering 243-252 (HITDHQHISE) has biased composition (basic and acidic residues). 2 stretches are compositionally biased toward polar residues: residues 253–265 (STDV…SQEH) and 273–290 (RSQV…STAG). The span at 297–309 (SRAKKKKAVGLFR) shows a compositional bias: basic residues. Positions 299 to 309 (AKKKKAVGLFR) match the XLM motif.

The protein belongs to the XRCC4-XLF family. XLF subfamily. In terms of assembly, homodimer. Interacts with xrcc4; the interaction is direct and is mediated via a head-to-head interaction between N-terminal head regions. Component of the core long-range non-homologous end joining (NHEJ) complex (also named DNA-PK complex) composed of prkdc/DNA-PKcs, lig4, xrcc4, xrcc6/Ku70, xrcc5/Ku80 and nhej1/xlf.

The protein resides in the nucleus. It is found in the chromosome. DNA repair protein involved in DNA non-homologous end joining (NHEJ); it is required for double-strand break (DSB) repair and V(D)J recombination and is also involved in telomere maintenance. Plays a key role in NHEJ by promoting the ligation of various mismatched and non-cohesive ends. In some studies, has been shown to associate with xrcc4 to form alternating helical filaments that bridge DNA and act like a bandage, holding together the broken DNA until it is repaired. Alternatively, it has also been shown that rather than forming filaments, a single nhej1 dimer interacts through both head domains with xrcc4 to promote the close alignment of DNA ends. The xrcc4-nhej1/xlf subcomplex binds to the DNA fragments of a DSB in a highly diffusive manner and robustly bridges two independent DNA molecules, holding the broken DNA fragments in close proximity to one other. The mobility of the bridges ensures that the ends remain accessible for further processing by other repair factors. This chain is Non-homologous end-joining factor 1 (nhej1), found in Danio rerio (Zebrafish).